The following is a 488-amino-acid chain: Putative BPI/LBP family protein At1g04970 (488 aa).

The first 24 residues, 1–24, serve as a signal peptide directing secretion; it reads MDVGRCFLFLLLPSFFFLPSQTQS. 5 N-linked (GlcNAc...) asparagine glycosylation sites follow: asparagine 79, asparagine 109, asparagine 231, asparagine 242, and asparagine 341.

It belongs to the BPI/LBP/Plunc superfamily. BPI/LBP (TC 1.C.40) family.

The polypeptide is Putative BPI/LBP family protein At1g04970 (Arabidopsis thaliana (Mouse-ear cress)).